A 334-amino-acid chain; its full sequence is Small ribosomal subunit protein RACK1z (334 aa).

7 WD repeats span residues Gly16–Asp47, Gly73–Asp103, Gly115–Asn145, Gly163–Asn195, Gly207–Asp237, Asp248–Asp277, and Asn296–Lys326.

This sequence belongs to the WD repeat G protein beta family. Ribosomal protein RACK1 subfamily. As to quaternary structure, interacts with RAC1, RAC3, RAC6, RAR1, SGT1 and RBOHB. Homodimer and heterodimer with RACK1B. Widely expressed.

The protein localises to the cytoplasm. It localises to the cell membrane. Its function is as follows. Component of the RACK1 regulatory proteins that functions in innate immunity by interacting with multiple proteins in the RAC1 immune complex. Acts as a positive regulator of reactive oxygen species (ROS) production and is required for resistance against rice blast (M.grisea) infection. In Oryza sativa subsp. japonica (Rice), this protein is Small ribosomal subunit protein RACK1z (RACK1A).